Reading from the N-terminus, the 300-residue chain is Nucleotide-binding protein Dshi_0209 (300 aa).

An ATP-binding site is contributed by 20-27 (GPSGAGRT). 67–70 (DART) is a GTP binding site.

It belongs to the RapZ-like family.

In terms of biological role, displays ATPase and GTPase activities. In Dinoroseobacter shibae (strain DSM 16493 / NCIMB 14021 / DFL 12), this protein is Nucleotide-binding protein Dshi_0209.